A 366-amino-acid polypeptide reads, in one-letter code: Cyclin-O protein A (366 aa).

Disordered regions lie at residues 18–55 (AAFS…GIKK) and 80–99 (YETP…PYDS).

It belongs to the cyclin family.

It localises to the cytoplasm. Functionally, specifically required for generation of multiciliated cells, possibly by promoting a cell cycle state compatible with centriole amplification and maturation. Acts downstream of mcidas to promote mother centriole amplification and maturation in preparation for apical docking. The polypeptide is Cyclin-O protein A (ccno-a) (Xenopus laevis (African clawed frog)).